A 66-amino-acid polypeptide reads, in one-letter code: UPF0434 protein Mnod_1613 (66 aa).

It belongs to the UPF0434 family.

In Methylobacterium nodulans (strain LMG 21967 / CNCM I-2342 / ORS 2060), this protein is UPF0434 protein Mnod_1613.